Reading from the N-terminus, the 158-residue chain is NAD(P)H-quinone oxidoreductase subunit N (158 aa).

Belongs to the complex I NdhN subunit family. In terms of assembly, NDH-1 can be composed of about 15 different subunits; different subcomplexes with different compositions have been identified which probably have different functions.

It localises to the cellular thylakoid membrane. The catalysed reaction is a plastoquinone + NADH + (n+1) H(+)(in) = a plastoquinol + NAD(+) + n H(+)(out). It carries out the reaction a plastoquinone + NADPH + (n+1) H(+)(in) = a plastoquinol + NADP(+) + n H(+)(out). NDH-1 shuttles electrons from an unknown electron donor, via FMN and iron-sulfur (Fe-S) centers, to quinones in the respiratory and/or the photosynthetic chain. The immediate electron acceptor for the enzyme in this species is believed to be plastoquinone. Couples the redox reaction to proton translocation, and thus conserves the redox energy in a proton gradient. Cyanobacterial NDH-1 also plays a role in inorganic carbon-concentration. This Prochlorococcus marinus (strain MIT 9312) protein is NAD(P)H-quinone oxidoreductase subunit N.